We begin with the raw amino-acid sequence, 302 residues long: NAD kinase (302 aa).

The active-site Proton acceptor is the D79. Residues 79–80 (DG), 153–154 (ND), R181, D183, 194–199 (TAYALS), A218, and Q252 contribute to the NAD(+) site.

Belongs to the NAD kinase family. A divalent metal cation serves as cofactor.

The protein resides in the cytoplasm. It catalyses the reaction NAD(+) + ATP = ADP + NADP(+) + H(+). Its function is as follows. Involved in the regulation of the intracellular balance of NAD and NADP, and is a key enzyme in the biosynthesis of NADP. Catalyzes specifically the phosphorylation on 2'-hydroxyl of the adenosine moiety of NAD to yield NADP. This chain is NAD kinase, found in Ralstonia nicotianae (strain ATCC BAA-1114 / GMI1000) (Ralstonia solanacearum).